The primary structure comprises 310 residues: Aspartate carbamoyltransferase catalytic subunit (310 aa).

The carbamoyl phosphate site is built by Arg59 and Thr60. Lys87 serves as a coordination point for L-aspartate. 3 residues coordinate carbamoyl phosphate: Arg109, His139, and Gln142. Arg172 and Arg224 together coordinate L-aspartate. Positions 265 and 266 each coordinate carbamoyl phosphate.

The protein belongs to the aspartate/ornithine carbamoyltransferase superfamily. ATCase family. Heterododecamer (2C3:3R2) of six catalytic PyrB chains organized as two trimers (C3), and six regulatory PyrI chains organized as three dimers (R2).

The catalysed reaction is carbamoyl phosphate + L-aspartate = N-carbamoyl-L-aspartate + phosphate + H(+). The protein operates within pyrimidine metabolism; UMP biosynthesis via de novo pathway; (S)-dihydroorotate from bicarbonate: step 2/3. Catalyzes the condensation of carbamoyl phosphate and aspartate to form carbamoyl aspartate and inorganic phosphate, the committed step in the de novo pyrimidine nucleotide biosynthesis pathway. This Lactococcus lactis subsp. cremoris (strain MG1363) protein is Aspartate carbamoyltransferase catalytic subunit.